Reading from the N-terminus, the 554-residue chain is DM7 family protein GG17593 (554 aa).

It belongs to the DM7 family.

This Drosophila erecta (Fruit fly) protein is DM7 family protein GG17593.